Reading from the N-terminus, the 596-residue chain is Elongation factor 4 (596 aa).

Residues 2–184 (KHIRNFSIIA…VIVDQIPPPE (183 aa)) enclose the tr-type G domain. Residues 14–19 (DHGKST) and 131–134 (NKID) contribute to the GTP site.

Belongs to the TRAFAC class translation factor GTPase superfamily. Classic translation factor GTPase family. LepA subfamily.

Its subcellular location is the cell inner membrane. It catalyses the reaction GTP + H2O = GDP + phosphate + H(+). Its function is as follows. Required for accurate and efficient protein synthesis under certain stress conditions. May act as a fidelity factor of the translation reaction, by catalyzing a one-codon backward translocation of tRNAs on improperly translocated ribosomes. Back-translocation proceeds from a post-translocation (POST) complex to a pre-translocation (PRE) complex, thus giving elongation factor G a second chance to translocate the tRNAs correctly. Binds to ribosomes in a GTP-dependent manner. The protein is Elongation factor 4 of Shewanella sp. (strain ANA-3).